Consider the following 393-residue polypeptide: Sugar efflux transporter B (393 aa).

Transmembrane regions (helical) follow at residues 13–33, 51–71, 82–102, 106–126, 152–172, 174–194, 219–239, 253–273, 283–303, 306–326, 344–364, and 366–386; these read FDLT…AGAL, AMVG…SQFL, KSLI…FAWN, FVLL…NPQM, VSLA…GFSF, VMYL…WLFL, LLLF…IINM, LAGV…LIAG, FLMR…LMAH, VILL…GGIG, LYTN…GIVA, and IWNY…TLFC.

It belongs to the major facilitator superfamily. Set transporter family.

Its subcellular location is the cell inner membrane. Involved in the efflux of sugars. The physiological role may be the detoxification of non-metabolizable sugar analogs. Can transport lactose and glucose. This chain is Sugar efflux transporter B (setB), found in Escherichia coli (strain K12).